The primary structure comprises 198 residues: Cell division protein SepF (198 aa).

Positions 170-198 (EVPQPPARPARPASTNPPAWGNETNRMAQ) are disordered. The segment covering 179–188 (ARPASTNPPA) has biased composition (low complexity).

Belongs to the SepF family. Homodimer. Interacts with FtsZ.

The protein resides in the cytoplasm. Its function is as follows. Cell division protein that is part of the divisome complex and is recruited early to the Z-ring. Probably stimulates Z-ring formation, perhaps through the cross-linking of FtsZ protofilaments. Its function overlaps with FtsA. The polypeptide is Cell division protein SepF (Nostoc sp. (strain PCC 7120 / SAG 25.82 / UTEX 2576)).